Reading from the N-terminus, the 546-residue chain is Chaperonin GroEL (546 aa).

ATP is bound by residues 30 to 33 (TLGP), lysine 51, 87 to 91 (DGTTT), glycine 415, and aspartate 496. The disordered stretch occupies residues 526 to 546 (PEPKSAPAGGMGGMGGMDGMM). Over residues 534–546 (GGMGGMGGMDGMM) the composition is skewed to gly residues.

This sequence belongs to the chaperonin (HSP60) family. In terms of assembly, forms a cylinder of 14 subunits composed of two heptameric rings stacked back-to-back. Interacts with the co-chaperonin GroES.

Its subcellular location is the cytoplasm. The catalysed reaction is ATP + H2O + a folded polypeptide = ADP + phosphate + an unfolded polypeptide.. Together with its co-chaperonin GroES, plays an essential role in assisting protein folding. The GroEL-GroES system forms a nano-cage that allows encapsulation of the non-native substrate proteins and provides a physical environment optimized to promote and accelerate protein folding. The sequence is that of Chaperonin GroEL from Rhodopseudomonas palustris.